A 555-amino-acid chain; its full sequence is Urocanate hydratase (555 aa).

NAD(+) contacts are provided by residues 51-52, Q129, 175-177, E195, 262-266, 272-273, and Y321; these read GG, GMG, QTSAH, and YL. C409 is an active-site residue. Residue G491 participates in NAD(+) binding.

Belongs to the urocanase family. It depends on NAD(+) as a cofactor.

Its subcellular location is the cytoplasm. The catalysed reaction is 4-imidazolone-5-propanoate = trans-urocanate + H2O. It functions in the pathway amino-acid degradation; L-histidine degradation into L-glutamate; N-formimidoyl-L-glutamate from L-histidine: step 2/3. In terms of biological role, catalyzes the conversion of urocanate to 4-imidazolone-5-propionate. The chain is Urocanate hydratase from Xanthomonas euvesicatoria pv. vesicatoria (strain 85-10) (Xanthomonas campestris pv. vesicatoria).